A 499-amino-acid chain; its full sequence is 2,3-bisphosphoglycerate-independent phosphoglycerate mutase (499 aa).

2 residues coordinate Mn(2+): aspartate 10 and serine 60. The Phosphoserine intermediate role is filled by serine 60. Residues histidine 121, 151–152 (RD), arginine 182, arginine 188, 253–256 (RPDR), and lysine 326 each bind substrate. Mn(2+) is bound by residues aspartate 391, histidine 395, aspartate 434, histidine 435, and histidine 452.

The protein belongs to the BPG-independent phosphoglycerate mutase family. Monomer. Mn(2+) serves as cofactor.

It catalyses the reaction (2R)-2-phosphoglycerate = (2R)-3-phosphoglycerate. It functions in the pathway carbohydrate degradation; glycolysis; pyruvate from D-glyceraldehyde 3-phosphate: step 3/5. Its function is as follows. Catalyzes the interconversion of 2-phosphoglycerate and 3-phosphoglycerate. The polypeptide is 2,3-bisphosphoglycerate-independent phosphoglycerate mutase (Metamycoplasma hominis (strain ATCC 23114 / DSM 25592 / NBRC 14850 / NCTC 10111 / PG21) (Mycoplasma hominis)).